A 223-amino-acid chain; its full sequence is Deoxyribose-phosphate aldolase (223 aa).

Asp89 serves as the catalytic Proton donor/acceptor. Catalysis depends on Lys152, which acts as the Schiff-base intermediate with acetaldehyde. Lys181 acts as the Proton donor/acceptor in catalysis.

Belongs to the DeoC/FbaB aldolase family. DeoC type 1 subfamily.

It localises to the cytoplasm. The enzyme catalyses 2-deoxy-D-ribose 5-phosphate = D-glyceraldehyde 3-phosphate + acetaldehyde. It participates in carbohydrate degradation; 2-deoxy-D-ribose 1-phosphate degradation; D-glyceraldehyde 3-phosphate and acetaldehyde from 2-deoxy-alpha-D-ribose 1-phosphate: step 2/2. Catalyzes a reversible aldol reaction between acetaldehyde and D-glyceraldehyde 3-phosphate to generate 2-deoxy-D-ribose 5-phosphate. The sequence is that of Deoxyribose-phosphate aldolase from Bacillus cereus (strain AH187).